The following is a 180-amino-acid chain: Fetal and adult testis-expressed transcript protein homolog (180 aa).

Residues 77–108 (GPQLRGVGVVGEQGDGGAQPQENPGGSQGMRS) are disordered. Residues 84-93 (GVVGEQGDGG) show a composition bias toward gly residues. Polar residues predominate over residues 96–107 (PQENPGGSQGMR). A helical transmembrane segment spans residues 160–178 (VLLFTMLLSSCITNLWLWM).

In terms of assembly, interacts with BIK and RNF183. Interacts with IMMT/MIC60and EMD.

The protein resides in the mitochondrion. Its subcellular location is the mitochondrion outer membrane. It localises to the endoplasmic reticulum membrane. Involved in the regulation of endoplasmic reticulum (ER)-mitochondria coupling. Negatively regulates the ER-mitochondria distance and Ca(2+) transfer from ER to mitochondria possibly implicating it in the regulation of apoptosis. May collaborate with RNF183 to restrain BIK protein levels thus regulating apoptotic signaling. The chain is Fetal and adult testis-expressed transcript protein homolog (FATE1) from Bos taurus (Bovine).